The primary structure comprises 602 residues: MTSERQKRVRNFSIIAHIDHGKSTLADRLLEETGTLTQREMDEQTLDTMDLEKERGITIKSQAARLIYKRDDEKEYILNLIDTPGHVDFNYEVSRSLAACEGAILVVDATQGIQAQTLANCYLALEHNLEIVPVINKIDLPSARPEEVKREIEDIIGIDASDAPLISAKTGLNIKDVLEAVVEKVPYPKGEEEEPLKALIFDSYYDAYKGVVCYVRVKEGTIKPGTEIKLMATGRKYEVTETGVFVPEYMKIDGLEAGDVGYITASIKNVRDARVGDTITEAKRPATEALEGYRPAIPMVFSGIYPVDGAKYGELKEALEKLQINDAALSFEPETSIALGFGFRCGFLGLLHMDIIQERIEREFNLDIITTAPSVIYKVTKTNKETIDVTNPTNLPEESEIAYMEEPIVECSIITPSDYVGPIMELCQNRRGVFKDMQYIETTRVVLNYDIPLNEIIYDFFDALKSRSRGYASLDYELKGYTQSKLVKLDILLNGDNVDALSMIVPEERAYSRGRQMAEKLKEIIPRQMFEVPIQAAVGSKVIARETVRALRKDVLAKCYGGDISRKKKLLEKQKEGKKRMRQIGSVEIPQEAFMSVLKTEE.

The tr-type G domain occupies 7 to 189; sequence KRVRNFSIIA…AVVEKVPYPK (183 aa). Residues 19 to 24 and 136 to 139 contribute to the GTP site; these read DHGKST and NKID.

The protein belongs to the TRAFAC class translation factor GTPase superfamily. Classic translation factor GTPase family. LepA subfamily.

The protein localises to the cell membrane. The enzyme catalyses GTP + H2O = GDP + phosphate + H(+). Required for accurate and efficient protein synthesis under certain stress conditions. May act as a fidelity factor of the translation reaction, by catalyzing a one-codon backward translocation of tRNAs on improperly translocated ribosomes. Back-translocation proceeds from a post-translocation (POST) complex to a pre-translocation (PRE) complex, thus giving elongation factor G a second chance to translocate the tRNAs correctly. Binds to ribosomes in a GTP-dependent manner. The sequence is that of Elongation factor 4 from Clostridium tetani (strain Massachusetts / E88).